A 172-amino-acid polypeptide reads, in one-letter code: Adenine phosphoribosyltransferase (172 aa).

This sequence belongs to the purine/pyrimidine phosphoribosyltransferase family. Homodimer.

The protein localises to the cytoplasm. The catalysed reaction is AMP + diphosphate = 5-phospho-alpha-D-ribose 1-diphosphate + adenine. The protein operates within purine metabolism; AMP biosynthesis via salvage pathway; AMP from adenine: step 1/1. Catalyzes a salvage reaction resulting in the formation of AMP, that is energically less costly than de novo synthesis. This is Adenine phosphoribosyltransferase from Clostridium botulinum (strain Alaska E43 / Type E3).